We begin with the raw amino-acid sequence, 207 residues long: Large ribosomal subunit protein uL4 (207 aa).

Residues 49-78 (HAVKNRSAVSGGGRKPWRQKGTGRARQGSI) form a disordered region.

It belongs to the universal ribosomal protein uL4 family. As to quaternary structure, part of the 50S ribosomal subunit.

In terms of biological role, one of the primary rRNA binding proteins, this protein initially binds near the 5'-end of the 23S rRNA. It is important during the early stages of 50S assembly. It makes multiple contacts with different domains of the 23S rRNA in the assembled 50S subunit and ribosome. Its function is as follows. Forms part of the polypeptide exit tunnel. The polypeptide is Large ribosomal subunit protein uL4 (Streptococcus pyogenes serotype M49 (strain NZ131)).